The chain runs to 129 residues: Transcriptional activator protein (129 aa).

Residues methionine 1–lysine 20 are disordered. A Nuclear localization signal motif is present at residues lysine 13–arginine 28. A zinc finger lies at cysteine 33 to histidine 50. The interval leucine 73–aspartate 118 is disordered. Polar residues-rich tracts occupy residues phenylalanine 74 to glutamine 86 and aspartate 94 to serine 109. Position 109 is a phosphoserine; by host (serine 109). Positions serine 115–serine 129 are transactivation.

The protein belongs to the geminiviridae transcriptional activator protein family. Monomer. Homodimer. Homooligomer. Self-interaction correlates with nuclear localization and efficient activation of transcription. Monomers suppress local silencing by interacting with and inactivating host adenosine kinase 2 (ADK2) in the cytoplasm. Interacts with and inhibits host SNF1 kinase. Phosphorylated at Ser-109 by A.thaliana KIN10.

Its subcellular location is the host nucleus. The protein localises to the host cytoplasm. Its function is as follows. Strong activator of the late viral genes promoters. Enhances the expression of the capsid protein and nuclear shuttle protein. Acts as a suppressor of RNA-mediated gene silencing, also known as post-transcriptional gene silencing (PTGS), a mechanism of plant viral defense that limits the accumulation of viral RNAs. Suppresses the host RNA silencing by inhibiting adenosine kinase 2 (ADK2), a kinase involved in a general methylation pathway. Also suppresses the host basal defense by interacting with and inhibiting SNF1 kinase, a key regulator of cell metabolism implicated in innate antiviral defense. Determines pathogenicity. In Nicotiana tabacum (Common tobacco), this protein is Transcriptional activator protein.